The following is a 306-amino-acid chain: Oxygen-dependent coproporphyrinogen-III oxidase (306 aa).

Residue serine 94 coordinates substrate. 2 residues coordinate a divalent metal cation: histidine 98 and histidine 108. Histidine 108 serves as the catalytic Proton donor. Position 110 to 112 (110 to 112 (NVR)) interacts with substrate. Residues histidine 147 and histidine 177 each coordinate a divalent metal cation. The tract at residues 242-277 (YVEFNLVYDRGTLFGLQTGGRTESILMSMPPLVRWQ) is important for dimerization. 260–262 (GGR) serves as a coordination point for substrate.

Belongs to the aerobic coproporphyrinogen-III oxidase family. Homodimer. A divalent metal cation serves as cofactor.

The protein resides in the cytoplasm. It carries out the reaction coproporphyrinogen III + O2 + 2 H(+) = protoporphyrinogen IX + 2 CO2 + 2 H2O. It functions in the pathway porphyrin-containing compound metabolism; protoporphyrin-IX biosynthesis; protoporphyrinogen-IX from coproporphyrinogen-III (O2 route): step 1/1. Functionally, involved in the heme biosynthesis. Catalyzes the aerobic oxidative decarboxylation of propionate groups of rings A and B of coproporphyrinogen-III to yield the vinyl groups in protoporphyrinogen-IX. The polypeptide is Oxygen-dependent coproporphyrinogen-III oxidase (Shewanella sediminis (strain HAW-EB3)).